We begin with the raw amino-acid sequence, 1002 residues long: Mitogen-activated protein kinase kinase kinase 21 (1002 aa).

A disordered region spans residues 1-26; sequence MALPVAEGTADTPLSPARDDSGSTSS. The SH3 domain occupies 24 to 88; that stretch reads TSSGMWAALY…PASYVAPCGP (65 aa). The region spanning 110 to 390 is the Protein kinase domain; it reads LELKELIGAG…QLTAIEEAVL (281 aa). ATP-binding positions include 116 to 124 and Lys137; that span reads IGAGGFGQV. Asp247 functions as the Proton acceptor in the catalytic mechanism. Thr283 is subject to Phosphothreonine; by autocatalysis. Ser287 is subject to Phosphoserine; by autocatalysis and MAP4K1. Leucine-zipper stretches follow at residues 409–430 and 444–466; these read IQQMFSELRTKEKELRSREEEL and LRRREQQLAEREIDVLERELNVL. 6 disordered regions span residues 508–531, 574–604, 640–689, 721–778, 797–823, and 878–899; these read TVQASPTLDKRRSSDSGLCSPPGS, GCTWGPSSVQTKERPEGRERVRPLSDGNSPW, HRKP…VGAP, AQAP…SHSS, LGNARDLCGPTTLTPDPGSAAPESGCE, and QSAPEDSGLPHSPSPGPQRDLA. Residues Ser512, Ser527, and Ser531 each carry the phosphoserine modification. The residue at position 576 (Thr576) is a Phosphothreonine. A compositionally biased stretch (basic and acidic residues) spans 584-596; sequence TKERPEGRERVRP. Ser598 carries the post-translational modification Phosphoserine. Residues 661 to 677 are compositionally biased toward basic and acidic residues; the sequence is DSQREDSSEAESREEGS. Low complexity-rich tracts occupy residues 740 to 758 and 766 to 778; these read QPASRCQSSPSSLLRQPSA and STLLLPSAPSHSS.

Belongs to the protein kinase superfamily. STE Ser/Thr protein kinase family. MAP kinase kinase kinase subfamily. Homodimer. Interacts with TLR4. It depends on Mg(2+) as a cofactor. Autophosphorylation on serine and threonine residues within the activation loop plays a role in enzyme activation.

It carries out the reaction L-seryl-[protein] + ATP = O-phospho-L-seryl-[protein] + ADP + H(+). The catalysed reaction is L-threonyl-[protein] + ATP = O-phospho-L-threonyl-[protein] + ADP + H(+). Its activity is regulated as follows. Homodimerization via the leucine zipper domains is required for autophosphorylation and subsequent activation. In terms of biological role, negative regulator of TLR4 signaling. Does not activate JNK1/MAPK8 pathway, p38/MAPK14, nor ERK2/MAPK1 pathways. The polypeptide is Mitogen-activated protein kinase kinase kinase 21 (Map3k21) (Mus musculus (Mouse)).